Reading from the N-terminus, the 65-residue chain is Large ribosomal subunit protein bL35 (65 aa).

Positions 1–29 (MPKMKTNRGAAKRFKKTGSGRIKRGKAFT) are disordered. Basic residues predominate over residues 10-26 (AAKRFKKTGSGRIKRGK).

Belongs to the bacterial ribosomal protein bL35 family.

The polypeptide is Large ribosomal subunit protein bL35 (Desulfotalea psychrophila (strain LSv54 / DSM 12343)).